The following is a 145-amino-acid chain: Hemoglobin subunit beta (145 aa).

The 145-residue stretch at 1–145 (MLTAEEKAAV…VANALAHRYH (145 aa)) folds into the Globin domain. T11 is modified (phosphothreonine). A Phosphoserine modification is found at S43. At K58 the chain carries N6-acetyllysine. A heme b-binding site is contributed by H62. K81 carries the post-translational modification N6-acetyllysine. H91 provides a ligand contact to heme b. An S-nitrosocysteine modification is found at C92.

Belongs to the globin family. In terms of assembly, heterotetramer of two alpha chains and two beta chains. In terms of tissue distribution, red blood cells.

Functionally, involved in oxygen transport from the lung to the various peripheral tissues. The sequence is that of Hemoglobin subunit beta (HBB) from Bos gaurus frontalis (Domestic gayal).